The primary structure comprises 336 residues: Casein kinase II subunit alpha (336 aa).

The region spanning 32-317 (YEVVRKIGRG…AKEAMAHPYF (286 aa)) is the Protein kinase domain. Residues 38–46 (IGRGKYSEV) and Lys61 each bind ATP. Asp149 serves as the catalytic Proton acceptor.

This sequence belongs to the protein kinase superfamily. Ser/Thr protein kinase family. CK2 subfamily. In terms of assembly, tetramer composed of two alpha chains, one beta chain and one beta' chain.

The catalysed reaction is L-seryl-[protein] + ATP = O-phospho-L-seryl-[protein] + ADP + H(+). The enzyme catalyses L-threonyl-[protein] + ATP = O-phospho-L-threonyl-[protein] + ADP + H(+). In terms of biological role, catalytic subunit of a constitutively active serine/threonine-protein kinase complex that phosphorylates a large number of substrates containing acidic residues C-terminal to the phosphorylated serine or threonine. Phosphorylates the frq clock protein thus regulating the circadian clock. This is Casein kinase II subunit alpha (cka) from Neurospora crassa (strain ATCC 24698 / 74-OR23-1A / CBS 708.71 / DSM 1257 / FGSC 987).